Consider the following 251-residue polypeptide: Triosephosphate isomerase (251 aa).

9 to 11 contributes to the substrate binding site; the sequence is NWK. Histidine 94 serves as the catalytic Electrophile. The Proton acceptor role is filled by glutamate 163. Substrate contacts are provided by residues glycine 169, serine 209, and 230–231; that span reads GG.

It belongs to the triosephosphate isomerase family. In terms of assembly, homodimer.

The protein localises to the cytoplasm. The enzyme catalyses D-glyceraldehyde 3-phosphate = dihydroxyacetone phosphate. It participates in carbohydrate biosynthesis; gluconeogenesis. Its pathway is carbohydrate degradation; glycolysis; D-glyceraldehyde 3-phosphate from glycerone phosphate: step 1/1. Functionally, involved in the gluconeogenesis. Catalyzes stereospecifically the conversion of dihydroxyacetone phosphate (DHAP) to D-glyceraldehyde-3-phosphate (G3P). The protein is Triosephosphate isomerase of Dehalococcoides mccartyi (strain ATCC BAA-2266 / KCTC 15142 / 195) (Dehalococcoides ethenogenes (strain 195)).